The chain runs to 253 residues: Phosphate import ATP-binding protein PstB (253 aa).

The ABC transporter domain occupies 7–248; it reads IEVEDLNVYF…PRDKRTEDYI (242 aa). 39-46 lines the ATP pocket; the sequence is GPSGCGKS.

The protein belongs to the ABC transporter superfamily. Phosphate importer (TC 3.A.1.7) family. In terms of assembly, the complex is composed of two ATP-binding proteins (PstB), two transmembrane proteins (PstC and PstA) and a solute-binding protein (PstS).

Its subcellular location is the cell membrane. The catalysed reaction is phosphate(out) + ATP + H2O = ADP + 2 phosphate(in) + H(+). In terms of biological role, part of the ABC transporter complex PstSACB involved in phosphate import. Responsible for energy coupling to the transport system. The protein is Phosphate import ATP-binding protein PstB of Methanothermobacter thermautotrophicus (strain ATCC 29096 / DSM 1053 / JCM 10044 / NBRC 100330 / Delta H) (Methanobacterium thermoautotrophicum).